We begin with the raw amino-acid sequence, 398 residues long: DNA replication and repair protein RecF (398 aa).

Residue 30-37 (GRNGFGKT) participates in ATP binding.

It belongs to the RecF family.

It localises to the cytoplasm. Its function is as follows. The RecF protein is involved in DNA metabolism; it is required for DNA replication and normal SOS inducibility. RecF binds preferentially to single-stranded, linear DNA. It also seems to bind ATP. This is DNA replication and repair protein RecF from Corynebacterium efficiens (strain DSM 44549 / YS-314 / AJ 12310 / JCM 11189 / NBRC 100395).